The chain runs to 949 residues: Protocadherin alpha-11 (949 aa).

The first 29 residues, Met-1–Gly-29, serve as a signal peptide directing secretion. Cadherin domains are found at residues Gln-30–Phe-133, Ala-157–Phe-242, Asp-243–Val-349, Ala-350–Phe-454, Ala-455–Leu-564, and Val-580–Ala-677. The Extracellular portion of the chain corresponds to Gln-30–Asn-696. Residues Asn-265 and Asn-304 are each glycosylated (N-linked (GlcNAc...) asparagine). An N-linked (GlcNAc...) asparagine glycan is attached at Asn-547. Residues Val-697–Tyr-717 traverse the membrane as a helical segment. Residues Thr-718–Gln-949 lie on the Cytoplasmic side of the membrane. 2 PXXP repeats span residues Pro-733–Pro-736 and Pro-773–Pro-776. The segment at Pro-733 to Pro-893 is 6 X 4 AA repeats of P-X-X-P. Disordered regions lie at residues Arg-753–Tyr-807, Ile-826–Gly-858, and Tyr-870–Ile-889. Basic and acidic residues predominate over residues Asn-780–Glu-789. PXXP repeat units lie at residues Pro-795 to Pro-798, Pro-831 to Pro-834, Pro-872 to Pro-875, and Pro-890 to Pro-893. Residues Gln-900–Gln-949 are disordered. Basic and acidic residues predominate over residues Asp-908–Lys-922.

It localises to the cell membrane. Potential calcium-dependent cell-adhesion protein. May be involved in the establishment and maintenance of specific neuronal connections in the brain. In Pan troglodytes (Chimpanzee), this protein is Protocadherin alpha-11 (PCDHA11).